Here is a 780-residue protein sequence, read N- to C-terminus: Semaphorin-3G (780 aa).

Residues 1–22 (MDPSAWAICCLLGSLLFHVGIP) form the signal peptide. The Sema domain maps to 32 to 519 (RLRLSYRDLL…SPLGVARLQL (488 aa)). The N-linked (GlcNAc...) asparagine glycan is linked to N44. C105 and C116 are disulfide-bonded. An N-linked (GlcNAc...) asparagine glycan is attached at N127. 5 disulfides stabilise this stretch: C134–C143, C270–C382, C294–C342, C522–C540, and C603–C655. The Ig-like C2-type domain occupies 569–671 (PAVQCLGQGQ…FSQTVVRFAL (103 aa)). N652 is a glycosylation site (N-linked (GlcNAc...) asparagine).

It belongs to the semaphorin family. Highly expressed in lung and kidney. Weakly expressed in brain.

The protein localises to the secreted. Its function is as follows. Has chemorepulsive activities for sympathetic axons. Ligand of NRP2. This chain is Semaphorin-3G (Sema3g), found in Mus musculus (Mouse).